The chain runs to 338 residues: Glycerol-3-phosphate dehydrogenase [NAD(P)+] (338 aa).

Ser-18, Tyr-19, His-39, and Lys-113 together coordinate NADPH. Sn-glycerol 3-phosphate-binding residues include Lys-113, Gly-142, and Thr-144. Ala-146 is an NADPH binding site. Residues Lys-198, Asp-251, Ser-261, Arg-262, and Asn-263 each coordinate sn-glycerol 3-phosphate. Lys-198 serves as the catalytic Proton acceptor. NADPH is bound at residue Arg-262. NADPH contacts are provided by Val-286 and Glu-288.

Belongs to the NAD-dependent glycerol-3-phosphate dehydrogenase family.

The protein localises to the cytoplasm. The catalysed reaction is sn-glycerol 3-phosphate + NAD(+) = dihydroxyacetone phosphate + NADH + H(+). The enzyme catalyses sn-glycerol 3-phosphate + NADP(+) = dihydroxyacetone phosphate + NADPH + H(+). The protein operates within membrane lipid metabolism; glycerophospholipid metabolism. Its function is as follows. Catalyzes the reduction of the glycolytic intermediate dihydroxyacetone phosphate (DHAP) to sn-glycerol 3-phosphate (G3P), the key precursor for phospholipid synthesis. The protein is Glycerol-3-phosphate dehydrogenase [NAD(P)+] of Photobacterium profundum (strain SS9).